A 230-amino-acid chain; its full sequence is MRKPSITITTAKAIITPDYTLIKSHSKYQLPSRFQKLDADSPERSTVVKLFYRRFMRLKPFISNVKMVKDTYRDYVRYKFMKENYELKRYLVFNPDGLRSKINLELLSNTKCCERILPVTEMQRTLEFVLKSCSYLPETKVQKWDIARDNTYCRQILKNLLTMQYEKYRSILHRGIGHDELDVKFSHLKTTSSPLTKLNKTEKKKIPLFKVFSDFDTTLIYLNETLGTRL.

It belongs to the IRC19 family.

Its function is as follows. Involved in sporulation and maintenance of the mitochondrial DNA. Is probably involved in a pathway contributing to genomic integrity. In Saccharomyces cerevisiae (strain ATCC 204508 / S288c) (Baker's yeast), this protein is Increased recombination centers protein 19 (IRC19).